Reading from the N-terminus, the 482-residue chain is Ubiquitin carboxyl-terminal hydrolase 6 (482 aa).

The 76-residue stretch at 2-77 (PTVSVKWQKK…LMMMGTADEI (76 aa)) folds into the Ubiquitin-like domain. The region spanning 104-478 (AGLVNLGNTC…MAYITMYKAR (375 aa)) is the USP domain. Catalysis depends on cysteine 113, which acts as the Nucleophile. Positions 172 to 191 (SQFWMVLRKKYPQFSQLQNG) are calmodulin-binding. Composition is skewed to basic and acidic residues over residues 350-361 (PRQKLREEEGKK) and 371-381 (GSKDSDVKMTD). Positions 350-407 (PRQKLREEEGKKLGLQTSAKSGSKDSDVKMTDAEASANGSGESSTVNPQEGTSSEKET) are disordered. Residues 382 to 393 (AEASANGSGESS) show a composition bias toward low complexity. Histidine 430 serves as the catalytic Proton acceptor.

The protein belongs to the peptidase C19 family. As to quaternary structure, interacts with calmodulin (CaM).

It catalyses the reaction Thiol-dependent hydrolysis of ester, thioester, amide, peptide and isopeptide bonds formed by the C-terminal Gly of ubiquitin (a 76-residue protein attached to proteins as an intracellular targeting signal).. Functionally, recognizes and hydrolyzes the peptide bond at the C-terminal Gly of ubiquitin. Involved in the processing of poly-ubiquitin precursors as well as that of ubiquitinated proteins. This Arabidopsis thaliana (Mouse-ear cress) protein is Ubiquitin carboxyl-terminal hydrolase 6 (UBP6).